The sequence spans 382 residues: Galactokinase (382 aa).

34–37 (EHTD) serves as a coordination point for substrate. 124–130 (GAGLSSS) is a binding site for ATP. Mg(2+)-binding residues include serine 130 and glutamate 162. Aspartate 174 serves as the catalytic Proton acceptor. Residue tyrosine 223 participates in substrate binding.

Belongs to the GHMP kinase family. GalK subfamily.

Its subcellular location is the cytoplasm. It catalyses the reaction alpha-D-galactose + ATP = alpha-D-galactose 1-phosphate + ADP + H(+). Its pathway is carbohydrate metabolism; galactose metabolism. Functionally, catalyzes the transfer of the gamma-phosphate of ATP to D-galactose to form alpha-D-galactose-1-phosphate (Gal-1-P). The chain is Galactokinase from Shigella flexneri serotype 5b (strain 8401).